Here is a 570-residue protein sequence, read N- to C-terminus: Carotenoid cleavage dioxygenase 8, chloroplastic (570 aa).

The N-terminal 56 residues, 1–56 (MASLITTKAMMSHHHVLSSTRITTLYSDNSIGDQQIKTKPQVPHRLFARRIFGVTR), are a transit peptide targeting the chloroplast. Fe cation-binding residues include H254, H305, H372, and H563.

This sequence belongs to the carotenoid oxygenase family. Requires Fe(2+) as cofactor. In terms of tissue distribution, expressed in flowers, siliques, inflorescence stems, petiole and leaves, and at a much higher level in roots.

It localises to the plastid. It is found in the chloroplast. It catalyses the reaction 9-cis-10'-apo-beta-carotenal + 2 O2 = (2E,4E,6E)-7-hydroxy-4-methylhepta-2,4,6-trienal + (11R)-carlactone. It carries out the reaction all-trans-10'-apo-beta-carotenal + O2 = (2E,4E,6E)-4-methylocta-2,4,6-trienedial + 13-apo-beta-carotenone. In terms of biological role, involved in strigolactones biosynthesis by cleaving the C(27) 9-cis-10'-apo-beta-carotenal produced by CCD7. Produces the C(19) carlactone and a C(8) hydroxyaldehyde. Also shows lower activity with all-trans-10'-apo-beta-carotenal producing a C(9) dialdehyde and the C(18) 13-apo-beta-carotenone. Strigolactones are hormones that inhibit tillering and shoot branching through the MAX-dependent pathway, contribute to the regulation of shoot architectural response to phosphate-limiting conditions and function as rhizosphere signal that stimulates hyphal branching of arbuscular mycorrhizal fungi and trigger seed germination of root parasitic weeds. Also active on other carotenoid substrates like licopene or zeaxanthin. The protein is Carotenoid cleavage dioxygenase 8, chloroplastic of Arabidopsis thaliana (Mouse-ear cress).